The following is a 315-amino-acid chain: Cytochrome c biogenesis protein CcsA (315 aa).

Helical transmembrane passes span 14 to 34 (VVSL…ISFW), 72 to 92 (ISNL…AQLF), 101 to 121 (IVSA…SFVL), 146 to 166 (VIMC…GVFL), 221 to 241 (SITA…VWAN), 255 to 272 (TWAL…HTRL), and 282 to 302 (AILA…VNLL).

This sequence belongs to the CcmF/CycK/Ccl1/NrfE/CcsA family. May interact with ccs1.

It localises to the cellular thylakoid membrane. Required during biogenesis of c-type cytochromes (cytochrome c6 and cytochrome f) at the step of heme attachment. In Prochlorococcus marinus (strain NATL1A), this protein is Cytochrome c biogenesis protein CcsA.